Reading from the N-terminus, the 1093-residue chain is Fused isobutyryl-CoA mutase (1093 aa).

The disordered stretch occupies residues 1–20 (MTDLSDVSRTAAAKPPAVPG). Residues 26–156 (KVRFVTAASL…AGMITDMAQR (131 aa)) form the B12-binding domain. Histidine 39 is a binding site for adenosylcob(III)alamin. Positions 169–417 (LDTVVAGDRR…YQGLVGALGA (249 aa)) are GTPase chaperone MeaI. A GTP-binding site is contributed by 219 to 224 (GAGKSS). Residues serine 223, isoleucine 248, aspartate 249, and aspartate 262 each contribute to the Mg(2+) site. Arginine 265 serves as a coordination point for GTP. Positions 310 and 311 each coordinate Mg(2+). 357-360 (NKFD) lines the GTP pocket. The tract at residues 418–579 (RGMSLKPGTL…MRENVPGSFP (162 aa)) is linker. Substrate is bound by residues phenylalanine 587, arginine 622, arginine 728, tyrosine 772, serine 821, arginine 856, and lysine 861. GTP is bound by residues glutamate 973 and asparagine 1092.

Belongs to the IcmF family. As to quaternary structure, homodimer. It depends on adenosylcob(III)alamin as a cofactor. Mg(2+) is required as a cofactor.

It catalyses the reaction 2-methylpropanoyl-CoA = butanoyl-CoA. The enzyme catalyses 3-methylbutanoyl-CoA = 2,2-dimethylpropanoyl-CoA. The catalysed reaction is GTP + H2O = GDP + phosphate + H(+). Its activity is regulated as follows. Is prone to inactivation during catalytic turnover due to the occasional loss of the 5'-deoxyadenosine moiety and formation of the inactive cob(II)alamin cofactor in its active site. The GTPase activity of IcmF powers the ejection of the inactive cofactor and requires the presence of an acceptor protein, adenosyltransferase (ATR), for receiving it. ATR, in turn, catalyzes an adenosylation reaction converting cob(II)alamin in the presence of ATP and a reductant to the active AdoCbl cofactor. The repaired cofactor is then reloaded onto IcmF in a GTPase-gated step, regenerating active enzyme. The GTPase activity of IcmF is significantly decreased in the presence of excess of AdoCbl or cob(II)alamin and is higher in the apoenzyme state, indicating that the G-domain senses the presence and identity of the cofactor in the mutase active site. Functionally, catalyzes the reversible interconversion of isobutyryl-CoA and n-butyryl-CoA, and to a much lesser extent, of pivalyl-CoA and isovaleryl-CoA, using radical chemistry. Also exhibits GTPase activity, associated with its G-protein domain (MeaI) that functions as a chaperone that assists cofactor delivery and proper holo-enzyme assembly. The G-domain of IcmF also has a role in its cofactor repair. Does not display ATPase activity. In Cupriavidus metallidurans (strain ATCC 43123 / DSM 2839 / NBRC 102507 / CH34) (Ralstonia metallidurans), this protein is Fused isobutyryl-CoA mutase.